The following is a 920-amino-acid chain: Phosphoenolpyruvate carboxylase (920 aa).

Active-site residues include histidine 138 and lysine 583.

The protein belongs to the PEPCase type 1 family. The cofactor is Mg(2+).

The catalysed reaction is oxaloacetate + phosphate = phosphoenolpyruvate + hydrogencarbonate. In terms of biological role, forms oxaloacetate, a four-carbon dicarboxylic acid source for the tricarboxylic acid cycle. This is Phosphoenolpyruvate carboxylase from Streptococcus pyogenes serotype M3 (strain ATCC BAA-595 / MGAS315).